Consider the following 259-residue polypeptide: NAD(P)H-quinone oxidoreductase subunit K 2 (259 aa).

Positions 52, 53, 117, and 148 each coordinate [4Fe-4S] cluster.

It belongs to the complex I 20 kDa subunit family. As to quaternary structure, NDH-1 can be composed of about 15 different subunits; different subcomplexes with different compositions have been identified which probably have different functions. The cofactor is [4Fe-4S] cluster.

It is found in the cellular thylakoid membrane. The catalysed reaction is a plastoquinone + NADH + (n+1) H(+)(in) = a plastoquinol + NAD(+) + n H(+)(out). It carries out the reaction a plastoquinone + NADPH + (n+1) H(+)(in) = a plastoquinol + NADP(+) + n H(+)(out). Functionally, NDH-1 shuttles electrons from an unknown electron donor, via FMN and iron-sulfur (Fe-S) centers, to quinones in the respiratory and/or the photosynthetic chain. The immediate electron acceptor for the enzyme in this species is believed to be plastoquinone. Couples the redox reaction to proton translocation, and thus conserves the redox energy in a proton gradient. Cyanobacterial NDH-1 also plays a role in inorganic carbon-concentration. The chain is NAD(P)H-quinone oxidoreductase subunit K 2 (ndhK2) from Cyanothece sp. (strain PCC 7425 / ATCC 29141).